A 388-amino-acid polypeptide reads, in one-letter code: Na(+)/H(+) antiporter NhaA (388 aa).

Over 1–11 (MKHLHRFFSSD) the chain is Cytoplasmic. Residues 12-31 (ASGGIILIIAAVLAMIMANS) form a helical membrane-spanning segment. The Periplasmic segment spans residues 32–58 (GATSGWYHDFLETPVQLRVGTLEINKN). A helical membrane pass occupies residues 59-80 (MLLWINDALMAVFFLLVGLEVK). The Cytoplasmic portion of the chain corresponds to 81-96 (RELMQGSLASLRQAAF). A helical transmembrane segment spans residues 97 to 116 (PVIAAIGGMIVPALLYLAFN). Over 117–122 (YADPIT) the chain is Periplasmic. Residues 123–130 (REGWAIPA) form a helical membrane-spanning segment. The Cytoplasmic portion of the chain corresponds to 131-154 (ATDIAFALGVLALLGSRVPLALKI). The chain crosses the membrane as a helical span at residues 155–176 (FLMALAIIDDLGAIIIIALFYT). Residues 177–180 (NDLS) lie on the Periplasmic side of the membrane. The chain crosses the membrane as a helical span at residues 181 to 200 (MASLGVAAVAIAVLVVLNLC). Residues 201–204 (GVRR) are Cytoplasmic-facing. A helical membrane pass occupies residues 205-222 (TGVYILVGVVLWTAVLKS). Glycine 223 is a topological domain (periplasmic). A helical membrane pass occupies residues 224–236 (VHATLAGVIVGFF). Topologically, residues 237–253 (IPLKEKHGRSPAKRLEH) are cytoplasmic. A helical transmembrane segment spans residues 254–272 (VLHPWVAYLILPLFAFANA). Residues 273–286 (GVSLQGVTLEGLTS) are Periplasmic-facing. Residues 287–310 (ILPLGIIAGLLIGKPLGISLFCWL) traverse the membrane as a helical segment. Over 311–339 (ALRLKLAHLPEGTTYQQIMAVGILCGIGF) the chain is Cytoplasmic. Residues 340–350 (TMSIFIASLAF) form a helical membrane-spanning segment. The Periplasmic portion of the chain corresponds to 351–357 (GSVDPEL). The chain crosses the membrane as a helical span at residues 358 to 380 (INWAKLGILVGSISSAVIGYSWL). Residues 381–388 (RVRLRPSV) lie on the Cytoplasmic side of the membrane.

Belongs to the NhaA Na(+)/H(+) (TC 2.A.33) antiporter family.

The protein localises to the cell inner membrane. It catalyses the reaction Na(+)(in) + 2 H(+)(out) = Na(+)(out) + 2 H(+)(in). Na(+)/H(+) antiporter that extrudes sodium in exchange for external protons. The sequence is that of Na(+)/H(+) antiporter NhaA from Escherichia coli O1:K1 / APEC.